Here is a 255-residue protein sequence, read N- to C-terminus: Thiazole synthase (255 aa).

Lysine 96 serves as the catalytic Schiff-base intermediate with DXP. Residues glycine 157, alanine 183–glycine 184, and asparagine 205–threonine 206 each bind 1-deoxy-D-xylulose 5-phosphate.

Belongs to the ThiG family. In terms of assembly, homotetramer. Forms heterodimers with either ThiH or ThiS.

Its subcellular location is the cytoplasm. It catalyses the reaction [ThiS sulfur-carrier protein]-C-terminal-Gly-aminoethanethioate + 2-iminoacetate + 1-deoxy-D-xylulose 5-phosphate = [ThiS sulfur-carrier protein]-C-terminal Gly-Gly + 2-[(2R,5Z)-2-carboxy-4-methylthiazol-5(2H)-ylidene]ethyl phosphate + 2 H2O + H(+). Its pathway is cofactor biosynthesis; thiamine diphosphate biosynthesis. Functionally, catalyzes the rearrangement of 1-deoxy-D-xylulose 5-phosphate (DXP) to produce the thiazole phosphate moiety of thiamine. Sulfur is provided by the thiocarboxylate moiety of the carrier protein ThiS. In vitro, sulfur can be provided by H(2)S. This Staphylococcus epidermidis (strain ATCC 12228 / FDA PCI 1200) protein is Thiazole synthase.